The sequence spans 328 residues: Malate dehydrogenase (328 aa).

11-17 is an NAD(+) binding site; that stretch reads GAAGQIG. Substrate is bound by residues arginine 92 and arginine 98. Residues asparagine 105, glutamine 112, and 129-131 contribute to the NAD(+) site; that span reads TGN. Positions 131 and 162 each coordinate substrate. Catalysis depends on histidine 187, which acts as the Proton acceptor.

It belongs to the LDH/MDH superfamily. MDH type 2 family.

The catalysed reaction is (S)-malate + NAD(+) = oxaloacetate + NADH + H(+). Functionally, catalyzes the reversible oxidation of malate to oxaloacetate. The chain is Malate dehydrogenase from Paenarthrobacter aurescens (strain TC1).